We begin with the raw amino-acid sequence, 178 residues long: Large ribosomal subunit protein uL6 (178 aa).

It belongs to the universal ribosomal protein uL6 family. As to quaternary structure, part of the 50S ribosomal subunit.

Functionally, this protein binds to the 23S rRNA, and is important in its secondary structure. It is located near the subunit interface in the base of the L7/L12 stalk, and near the tRNA binding site of the peptidyltransferase center. The protein is Large ribosomal subunit protein uL6 of Helicobacter pylori (strain Shi470).